The primary structure comprises 198 residues: T-cell surface glycoprotein CD3 epsilon chain (198 aa).

Positions 1–21 are cleaved as a signal peptide; it reads MRAGTLWRVLALWLLSVAAWG. At 22–120 the chain is on the extracellular side; the sequence is QEDDDHADDY…EACMEVDLTT (99 aa). Residues 28 to 106 enclose the Ig-like domain; it reads ADDYTQKLFT…KENEHILYLK (79 aa). A disulfide bond links Cys-49 and Cys-90. A helical transmembrane segment spans residues 121–141; that stretch reads VASIVVADVCVTLGLLLLVYY. At 142 to 198 the chain is on the cytoplasmic side; that stretch reads WSKNRKAKCKPVTRGAGAGGRPRGQNKERPPPVPNPDYEPIRKGQRDLYSGLNQRGI. Residues 153-198 form a disordered region; the sequence is VTRGAGAGGRPRGQNKERPPPVPNPDYEPIRKGQRDLYSGLNQRGI. Residues 166–183 form an NUMB-binding region region; it reads QNKERPPPVPNPDYEPIR. One can recognise an ITAM domain in the interval 169–196; sequence ERPPPVPNPDYEPIRKGQRDLYSGLNQR. Positions 170–177 are proline-rich sequence; sequence RPPPVPNP. Phosphotyrosine is present on residues Tyr-179 and Tyr-190.

The TCR-CD3 complex is composed of a CD3D/CD3E and a CD3G/CD3E heterodimers that preferentially associate with TCRalpha and TCRbeta, respectively, to form TCRalpha/CD3E/CD3G and TCRbeta/CD3G/CD3E trimers. In turn, the hexamer interacts with CD3Z homodimer to form the TCR-CD3 complex. Alternatively, TCRalpha and TCRbeta can be replaced by TCRgamma and TCRdelta. Interacts with CD6. Interacts (via Proline-rich sequence) with NCK1; the interaction is ligand dependent but independent of tyrosine kinase activation. Phosphorylated on Tyr residues after T-cell receptor triggering by LCK in association with CD4/CD8.

The protein localises to the cell membrane. In terms of biological role, part of the TCR-CD3 complex present on T-lymphocyte cell surface that plays an essential role in adaptive immune response. When antigen presenting cells (APCs) activate T-cell receptor (TCR), TCR-mediated signals are transmitted across the cell membrane by the CD3 chains CD3D, CD3E, CD3G and CD3Z. All CD3 chains contain immunoreceptor tyrosine-based activation motifs (ITAMs) in their cytoplasmic domain. Upon TCR engagement, these motifs become phosphorylated by Src family protein tyrosine kinases LCK and FYN, resulting in the activation of downstream signaling pathways. In addition of this role of signal transduction in T-cell activation, CD3E plays an essential role in correct T-cell development. Also participates in internalization and cell surface down-regulation of TCR-CD3 complexes via endocytosis sequences present in CD3E cytosolic region. In addition to its role as a TCR coreceptor, it serves as a receptor for ITPRIPL1. Ligand recognition inhibits T-cell activation by promoting interaction with NCK1, which prevents CD3E-ZAP70 interaction and blocks the ERK-NFkB signaling cascade and calcium influx. The sequence is that of T-cell surface glycoprotein CD3 epsilon chain (CD3E) from Oryctolagus cuniculus (Rabbit).